We begin with the raw amino-acid sequence, 144 residues long: uncharacterized protein (144 aa).

4 helical membrane-spanning segments follow: residues 7 to 29 (FPASVLQIALALFLLASGARDLV), 51 to 73 (VAIGVLTLAVSLCCLTAGFFLLV), 85 to 107 (AVLALFVVLWALNMVLVDVVGAF), and 122 to 139 (HLHHTAVDLLVLGALIFV).

The protein resides in the cell membrane. This is an uncharacterized protein from Treponema pallidum (strain Nichols).